The sequence spans 461 residues: MSRLLFIALPLLVLASIPLYLLVLKSPPPMPKLDLEEWWGPPELKQKQDTSIKPFEITFSETMVKELKERIKKRRPFAPPLEGVGFKYGFNSKQLDSWLKYWAEEYPFAERQKFLNQYPHFKTNIQGLNIHFMRITPKVPKDVEIVPLLLLHGWPGSVREFYEAIPHLTAVSRDRNFALEIIAPSLPGYGFSDAAVRPGLAAAEVAVIFKNLMARLGYKQYYVQGGDWGALIGSAMATSFPKEIIGFHSYMALTLSPAATFLEFVGALFPSLIVEPELANRLYPLSEKYSTLLEELGYMHIQATKPDTVGIGLTDSPAGLLAYILEKFSTWTNPDLRSKEDGGLSYRWTKDQLIDNLMLYWSTKSIVTSMRLYAESFSSRHFDLKLDEIQVQVPTWVLQAKHELAYQPPCILKLKYTKLVNASVIEDGGHFLAFELPEIFAKDVLKAIGEFRKLKNVKTEL.

Residues 4 to 24 traverse the membrane as a helical segment; it reads LLFIALPLLVLASIPLYLLVL. Asp-227 acts as the Nucleophile in catalysis. Catalysis depends on Tyr-373, which acts as the Proton donor. The Proton acceptor role is filled by His-430.

The protein belongs to the peptidase S33 family. As to quaternary structure, homodimer. Expressed in fat body, foregut and midgut but not in brain, subesophageal ganglia or silk gland of larvae on day 1 of fifth instar.

The protein localises to the microsome membrane. Its subcellular location is the endoplasmic reticulum membrane. It catalyses the reaction cis-stilbene oxide + H2O = (1R,2R)-hydrobenzoin. The catalysed reaction is 1-(4-methoxyphenyl)-N-methyl-N-[(3-methyloxetan-3-yl)methyl]methanamine + H2O = 2-{[(4-methoxybenzyl)(methyl)amino]methyl}-2-methylpropane-1,3-diol. Functionally, catalyzes juvenile hormone hydrolysis. Degrades juvenile hormone III (JH III) about 3 times and 5 times slower than juvenile hormone I (JH I) and II (JH II), respectively. Degrades cis-stilbene oxide and trans-stilbene oxide about 18 and 43 times slower than JH III, respectively. The sequence is that of Juvenile hormone epoxide hydrolase from Bombyx mori (Silk moth).